A 388-amino-acid chain; its full sequence is Probable RNA-binding protein sce3 (388 aa).

The tract at residues 18–84 (ESFGSTNWAD…GGMGSGYQRD (67 aa)) is disordered. Polar residues predominate over residues 38-50 (DRTTSTYRATPSS). Residues Ser-49, Ser-50, and Ser-60 each carry the phosphoserine modification. Residue Thr-61 is modified to Phosphothreonine. Ser-64, Ser-67, and Ser-71 each carry phosphoserine. The RRM domain maps to 94 to 169 (FTAHVGNLSF…RPVRITVAEP (76 aa)). Residues 171 to 185 (RSFAREERSTGDWVR) show a composition bias toward basic and acidic residues. The segment at 171–388 (RSFAREERST…WTKIGKGRKH (218 aa)) is disordered. At Ser-197 the chain carries Phosphoserine. Positions 208-229 (RFRDPARDPSDRVREEPREWVR) are enriched in basic and acidic residues. The segment covering 248–257 (PRSSSNVNTE) has biased composition (polar residues). Phosphoserine occurs at positions 250, 251, and 252. Residues 258–268 (ATPSATTTTSS) show a composition bias toward low complexity. Basic and acidic residues predominate over residues 289–349 (RVEEKLAKRT…LGDGEKKSSE (61 aa)). Ser-347 bears the Phosphoserine mark.

Its subcellular location is the cytoplasm. This chain is Probable RNA-binding protein sce3 (sce3), found in Schizosaccharomyces pombe (strain 972 / ATCC 24843) (Fission yeast).